A 208-amino-acid chain; its full sequence is MKIIIMLIIAYLIGAIPSGVIIGKFFFHTDIRQAGSGNIGTTNTYRVLGPTAGTIVMVMDILKGTIAALQPTLLFHMNNRYTLLIGLAAILGHTFSIYIGFKGGKAVATSAGILLAYNWEFFLIASAIMLLLVYTTSMVSVASMTAFPIVTLIAIFYYQDWLLSLVAFALTLFIFYRHRSNIARIKNGTESLVHFGLGWRRQQRANRK.

5 consecutive transmembrane segments (helical) span residues 3-23, 55-75, 81-101, 113-133, and 155-175; these read IIIM…VIIG, IVMV…TLLF, YTLL…YIGF, ILLA…LLLV, and IFYY…LFIF.

Belongs to the PlsY family. In terms of assembly, probably interacts with PlsX.

It localises to the cell membrane. It carries out the reaction an acyl phosphate + sn-glycerol 3-phosphate = a 1-acyl-sn-glycero-3-phosphate + phosphate. Its pathway is lipid metabolism; phospholipid metabolism. Catalyzes the transfer of an acyl group from acyl-phosphate (acyl-PO(4)) to glycerol-3-phosphate (G3P) to form lysophosphatidic acid (LPA). This enzyme utilizes acyl-phosphate as fatty acyl donor, but not acyl-CoA or acyl-ACP. In Lactiplantibacillus plantarum (strain ATCC BAA-793 / NCIMB 8826 / WCFS1) (Lactobacillus plantarum), this protein is Glycerol-3-phosphate acyltransferase.